We begin with the raw amino-acid sequence, 105 residues long: UPF0060 membrane protein Rmet_4032 (105 aa).

4 helical membrane-spanning segments follow: residues 4 to 24 (VGLY…PYLW), 28 to 48 (GASP…AWLL), 60 to 80 (AAYG…VDGV), and 82 to 102 (PSPW…IIVF).

This sequence belongs to the UPF0060 family.

The protein localises to the cell inner membrane. This is UPF0060 membrane protein Rmet_4032 from Cupriavidus metallidurans (strain ATCC 43123 / DSM 2839 / NBRC 102507 / CH34) (Ralstonia metallidurans).